A 249-amino-acid polypeptide reads, in one-letter code: Adenylate kinase (249 aa).

43–48 (GAGKGT) lines the ATP pocket. The NMP stretch occupies residues 63-92 (ATGDMLRAQVAAKTALGVEAKKIMDQGGLV). AMP is bound by residues threonine 64, arginine 69, 90–92 (GLV), 119–122 (GFPR), and glutamine 126. The LID stretch occupies residues 160–197 (GRLVHPASGRSYHKLFNPPKKDMTDDVTGEPLVQRSDD). Residues arginine 161 and 170-171 (SY) contribute to the ATP site. The disordered stretch occupies residues 177-197 (PPKKDMTDDVTGEPLVQRSDD). AMP contacts are provided by arginine 194 and arginine 205. Glutamine 233 contributes to the ATP binding site.

Belongs to the adenylate kinase family. AK2 subfamily. Monomer.

The protein resides in the cytoplasm. Its subcellular location is the cytosol. It is found in the mitochondrion intermembrane space. The enzyme catalyses AMP + ATP = 2 ADP. Functionally, catalyzes the reversible transfer of the terminal phosphate group between ATP and AMP. Plays an important role in cellular energy homeostasis and in adenine nucleotide metabolism. Adenylate kinase activity is critical for regulation of the phosphate utilization and the AMP de novo biosynthesis pathways. The protein is Adenylate kinase of Candida albicans (strain SC5314 / ATCC MYA-2876) (Yeast).